The sequence spans 388 residues: Succinate--CoA ligase [ADP-forming] subunit beta (388 aa).

In terms of domain architecture, ATP-grasp spans Lys9–His244. ATP contacts are provided by residues Lys46, Gly53–Gly55, Glu99, Thr102, and Glu107. Residues Asn199 and Asp213 each coordinate Mg(2+). Substrate-binding positions include Asn264 and Gly321 to Val323.

This sequence belongs to the succinate/malate CoA ligase beta subunit family. As to quaternary structure, heterotetramer of two alpha and two beta subunits. It depends on Mg(2+) as a cofactor.

The catalysed reaction is succinate + ATP + CoA = succinyl-CoA + ADP + phosphate. It carries out the reaction GTP + succinate + CoA = succinyl-CoA + GDP + phosphate. Its pathway is carbohydrate metabolism; tricarboxylic acid cycle; succinate from succinyl-CoA (ligase route): step 1/1. Succinyl-CoA synthetase functions in the citric acid cycle (TCA), coupling the hydrolysis of succinyl-CoA to the synthesis of either ATP or GTP and thus represents the only step of substrate-level phosphorylation in the TCA. The beta subunit provides nucleotide specificity of the enzyme and binds the substrate succinate, while the binding sites for coenzyme A and phosphate are found in the alpha subunit. This Stutzerimonas stutzeri (strain A1501) (Pseudomonas stutzeri) protein is Succinate--CoA ligase [ADP-forming] subunit beta.